We begin with the raw amino-acid sequence, 376 residues long: Erythronate-4-phosphate dehydrogenase (376 aa).

Residues Ser-45 and Thr-66 each coordinate substrate. 2 residues coordinate NAD(+): Asp-146 and Thr-175. Arg-209 is an active-site residue. Asp-233 provides a ligand contact to NAD(+). The active site involves Glu-238. The Proton donor role is filled by His-255. Residue Gly-258 participates in NAD(+) binding. A substrate-binding site is contributed by Tyr-259.

It belongs to the D-isomer specific 2-hydroxyacid dehydrogenase family. PdxB subfamily. As to quaternary structure, homodimer.

The protein resides in the cytoplasm. It catalyses the reaction 4-phospho-D-erythronate + NAD(+) = (R)-3-hydroxy-2-oxo-4-phosphooxybutanoate + NADH + H(+). The protein operates within cofactor biosynthesis; pyridoxine 5'-phosphate biosynthesis; pyridoxine 5'-phosphate from D-erythrose 4-phosphate: step 2/5. In terms of biological role, catalyzes the oxidation of erythronate-4-phosphate to 3-hydroxy-2-oxo-4-phosphonooxybutanoate. In Baumannia cicadellinicola subsp. Homalodisca coagulata, this protein is Erythronate-4-phosphate dehydrogenase.